Here is a 441-residue protein sequence, read N- to C-terminus: Phosphoglucosamine mutase (441 aa).

Residue Ser100 is the Phosphoserine intermediate of the active site. Ser100, Asp239, Asp241, and Asp243 together coordinate Mg(2+). Phosphoserine is present on Ser100.

Belongs to the phosphohexose mutase family. Requires Mg(2+) as cofactor. In terms of processing, activated by phosphorylation.

The enzyme catalyses alpha-D-glucosamine 1-phosphate = D-glucosamine 6-phosphate. Functionally, catalyzes the conversion of glucosamine-6-phosphate to glucosamine-1-phosphate. The chain is Phosphoglucosamine mutase from Ruthia magnifica subsp. Calyptogena magnifica.